We begin with the raw amino-acid sequence, 150 residues long: Macrodomain Ter protein (150 aa).

It belongs to the MatP family. Homodimer.

The protein localises to the cytoplasm. In terms of biological role, required for spatial organization of the terminus region of the chromosome (Ter macrodomain) during the cell cycle. Prevents early segregation of duplicated Ter macrodomains during cell division. Binds specifically to matS, which is a 13 bp signature motif repeated within the Ter macrodomain. The chain is Macrodomain Ter protein from Escherichia coli O8 (strain IAI1).